A 475-amino-acid chain; its full sequence is 3-hydroxyacyl-CoA dehydrogenase-like protein LAM1 (475 aa).

Position 99-104 (99-104 (GTRPFA)) interacts with NAD(+). Lys149 is a CoA binding site. Asn245 is an NAD(+) binding site.

It belongs to the 3-hydroxyacyl-CoA dehydrogenase family.

It functions in the pathway mycotoxin biosynthesis. 3-hydroxyacyl-CoA dehydrogenase-like protein; part of the Tox1A locus, one of the 2 loci that mediate the biosynthesis of T-toxin, a family of linear polyketides 37 to 45 carbons in length, of which the major component is 41 carbons, and which leads to high virulence to maize. One of the PKSs (PKS1 or PKS2) could synthesize a precursor, used subsequently by the other PKS as starter unit, to add additional carbons. Variability in the length of the final carbon backbone C35-47 could be achieved by varying the number of condensation cycles, or use of different starter or extender units or might be due to decarboxylation of the penultimate product, catalyzed by DEC1. Additional proteins are required for the biosynthesis of T-toxin, including oxidoreductases RED1, RED2, RED3, LAM1 and OXI1, as well as esterase TOX9. The protein is 3-hydroxyacyl-CoA dehydrogenase-like protein LAM1 of Cochliobolus heterostrophus (strain C4 / ATCC 48331 / race T) (Southern corn leaf blight fungus).